Consider the following 365-residue polypeptide: 3-dehydroquinate synthase (365 aa).

NAD(+)-binding positions include 106–110 (GVIGD), 130–131 (TT), Lys142, Lys151, and 169–172 (FFAT). Zn(2+) contacts are provided by Glu184, His247, and His264.

The protein belongs to the sugar phosphate cyclases superfamily. Dehydroquinate synthase family. The cofactor is Co(2+). Requires Zn(2+) as cofactor. NAD(+) is required as a cofactor.

It is found in the cytoplasm. The enzyme catalyses 7-phospho-2-dehydro-3-deoxy-D-arabino-heptonate = 3-dehydroquinate + phosphate. The protein operates within metabolic intermediate biosynthesis; chorismate biosynthesis; chorismate from D-erythrose 4-phosphate and phosphoenolpyruvate: step 2/7. Catalyzes the conversion of 3-deoxy-D-arabino-heptulosonate 7-phosphate (DAHP) to dehydroquinate (DHQ). The polypeptide is 3-dehydroquinate synthase (Listeria welshimeri serovar 6b (strain ATCC 35897 / DSM 20650 / CCUG 15529 / CIP 8149 / NCTC 11857 / SLCC 5334 / V8)).